We begin with the raw amino-acid sequence, 124 residues long: Small ribosomal subunit protein uS12 (124 aa).

3-methylthioaspartic acid is present on D89. Residues 104 to 124 (TQGVKNRGQARSRYGAKKEKK) are disordered. Positions 111–124 (GQARSRYGAKKEKK) are enriched in basic residues.

The protein belongs to the universal ribosomal protein uS12 family. As to quaternary structure, part of the 30S ribosomal subunit. Contacts proteins S8 and S17. May interact with IF1 in the 30S initiation complex.

Functionally, with S4 and S5 plays an important role in translational accuracy. Its function is as follows. Interacts with and stabilizes bases of the 16S rRNA that are involved in tRNA selection in the A site and with the mRNA backbone. Located at the interface of the 30S and 50S subunits, it traverses the body of the 30S subunit contacting proteins on the other side and probably holding the rRNA structure together. The combined cluster of proteins S8, S12 and S17 appears to hold together the shoulder and platform of the 30S subunit. This Micrococcus luteus (strain ATCC 4698 / DSM 20030 / JCM 1464 / CCM 169 / CCUG 5858 / IAM 1056 / NBRC 3333 / NCIMB 9278 / NCTC 2665 / VKM Ac-2230) (Micrococcus lysodeikticus) protein is Small ribosomal subunit protein uS12.